We begin with the raw amino-acid sequence, 814 residues long: DNA ligase (814 aa).

NAD(+)-binding positions include 46-50 (DAEYD), 95-96 (SL), and Glu129. Lys131 functions as the N6-AMP-lysine intermediate in the catalytic mechanism. Arg152, Glu189, Lys305, and Lys329 together coordinate NAD(+). Cys434, Cys437, Cys458, and Cys464 together coordinate Zn(2+). The interval 526–549 (SAQRRTEGEPAPKKPTKKKGEEED) is disordered. The BRCT domain maps to 735–814 (TSAAAFAGKT…DDWLAMLAEA (80 aa)).

The protein belongs to the NAD-dependent DNA ligase family. LigA subfamily. Requires Mg(2+) as cofactor. Mn(2+) is required as a cofactor.

It catalyses the reaction NAD(+) + (deoxyribonucleotide)n-3'-hydroxyl + 5'-phospho-(deoxyribonucleotide)m = (deoxyribonucleotide)n+m + AMP + beta-nicotinamide D-nucleotide.. In terms of biological role, DNA ligase that catalyzes the formation of phosphodiester linkages between 5'-phosphoryl and 3'-hydroxyl groups in double-stranded DNA using NAD as a coenzyme and as the energy source for the reaction. It is essential for DNA replication and repair of damaged DNA. The polypeptide is DNA ligase (Methylorubrum extorquens (strain CM4 / NCIMB 13688) (Methylobacterium extorquens)).